A 551-amino-acid polypeptide reads, in one-letter code: MNDHILISDGEDQTTPLPSLSKRARKYPISAILISDSDPTPQKQPPESSFTPIFVPETPLSDDFSVVKCSFGSRALASNREDKFSGKRIISLDSEFEDSPRPETSKKNESVLAGLREPRFGLEAETSEAYYKNTRIPETNLDDDTSWMHEVSFRSSPTNDTIEVVSDQEKEDISVEKIGRKKKIRTTTLPVPGEALPKKRQSKEDKTSAMEEKKLRKEQERLEKAASKAEEAERKRLEKEKKKWEKGKLALKSIVAEIDTKVLEGSIGGLLLSRFSEKGITIHVGPNPIERSIVWTMTIPEDIAPLFPQGPKIPYLLLVYDAEEFCNLVANGKFLEIISRVQDRYPSYTVCCLTNKLMSYVKKREKEEYKNPGNWRRPPIDEVLAKLTTHYVKVHSRHCVDEAEVAEHIVGLTSSLASCQFRKKLTMLSVSANGALVSKDSVDKHLIKKSPWLKALVAIPKVQPRYALAVWKKYPSMKSLLKVYMDRNKSVHEKEFLLKDLKVEGLVGGDIRLGEICSKRIYRVLMSHDGAIKTDDVENGAAFFTDSPGVN.

Disordered stretches follow at residues 1-55 (MNDH…PIFV) and 187-239 (TTLP…RLEK). A compositionally biased stretch (polar residues) spans 37–51 (SDPTPQKQPPESSFT). Residues 202 to 239 (SKEDKTSAMEEKKLRKEQERLEKAASKAEEAERKRLEK) are compositionally biased toward basic and acidic residues. Residues 203 to 253 (KEDKTSAMEEKKLRKEQERLEKAASKAEEAERKRLEKEKKKWEKGKLALKS) are a coiled coil. The 198-residue stretch at 287-484 (NPIERSIVWT…PSMKSLLKVY (198 aa)) folds into the ERCC4 domain.

It belongs to the EME1/MMS4 family. In terms of assembly, forms a heterodimer with MUS81. Requires Mg(2+) as cofactor. Ca(2+) serves as cofactor.

It localises to the nucleus. In terms of biological role, interacts with MUS81 to form a DNA structure-specific endonuclease with substrate preference for branched DNA structures with a 5'-end at the branch nick. Typical substrates include 3'-flap structures, D-loops, replication forks, nicked Holliday junctions and also intact Holliday junctions with a reduced efficiency. May be required in mitosis for the processing of stalled or collapsed replication fork intermediates. Plays a role in DNA repair and in genotoxic stress-induced homologous recombination (HR) in somatic cells. Mediates a subset of meiotic recombination events that are insensitive to crossover interference. In Arabidopsis thaliana (Mouse-ear cress), this protein is Crossover junction endonuclease EME1B (EME1B).